Reading from the N-terminus, the 129-residue chain is UPF0325 protein ECA1027 (129 aa).

It belongs to the UPF0325 family.

This chain is UPF0325 protein ECA1027, found in Pectobacterium atrosepticum (strain SCRI 1043 / ATCC BAA-672) (Erwinia carotovora subsp. atroseptica).